We begin with the raw amino-acid sequence, 338 residues long: Anthranilate phosphoribosyltransferase (338 aa).

5-phospho-alpha-D-ribose 1-diphosphate is bound by residues glycine 80, glycine 83–aspartate 84, threonine 88, asparagine 90–threonine 93, lysine 108–serine 116, and serine 120. Glycine 80 serves as a coordination point for anthranilate. Serine 92 is a binding site for Mg(2+). An anthranilate-binding site is contributed by asparagine 111. Arginine 166 contributes to the anthranilate binding site. Positions 225 and 226 each coordinate Mg(2+).

Belongs to the anthranilate phosphoribosyltransferase family. Homodimer. Mg(2+) is required as a cofactor.

It catalyses the reaction N-(5-phospho-beta-D-ribosyl)anthranilate + diphosphate = 5-phospho-alpha-D-ribose 1-diphosphate + anthranilate. It participates in amino-acid biosynthesis; L-tryptophan biosynthesis; L-tryptophan from chorismate: step 2/5. Functionally, catalyzes the transfer of the phosphoribosyl group of 5-phosphorylribose-1-pyrophosphate (PRPP) to anthranilate to yield N-(5'-phosphoribosyl)-anthranilate (PRA). This chain is Anthranilate phosphoribosyltransferase, found in Desulfatibacillum aliphaticivorans.